The chain runs to 349 residues: Large ribosomal subunit protein uL2mz, N-terminal part (349 aa).

This sequence belongs to the universal ribosomal protein uL2 family. In terms of assembly, component of the mitochondrial ribosome large subunit.

It localises to the mitochondrion. The protein is Large ribosomal subunit protein uL2mz, N-terminal part of Arabidopsis thaliana (Mouse-ear cress).